A 299-amino-acid chain; its full sequence is Homoserine O-acetyltransferase (299 aa).

The Acyl-thioester intermediate role is filled by Cys-142. Residues Lys-163 and Ser-192 each coordinate substrate. The Proton acceptor role is filled by His-235. The active site involves Glu-237. Arg-249 contacts substrate.

This sequence belongs to the MetA family.

It is found in the cytoplasm. The catalysed reaction is L-homoserine + acetyl-CoA = O-acetyl-L-homoserine + CoA. The protein operates within amino-acid biosynthesis; L-methionine biosynthesis via de novo pathway; O-acetyl-L-homoserine from L-homoserine: step 1/1. Functionally, transfers an acetyl group from acetyl-CoA to L-homoserine, forming acetyl-L-homoserine. The protein is Homoserine O-acetyltransferase of Synechococcus elongatus (strain ATCC 33912 / PCC 7942 / FACHB-805) (Anacystis nidulans R2).